Reading from the N-terminus, the 129-residue chain is MARRQVRTKRKDKKNVEQGVAHIKSTFNNTIVTITDLKGNTLGWSSAGQVGFKGSRKSTPFAAQMAAEAAAKDAMEHGLKEVEVTVKGPGSGREAAIRSLQAAGLEVNMIKDVTPIPHNGCRPPKRRRV.

This sequence belongs to the universal ribosomal protein uS11 family. As to quaternary structure, part of the 30S ribosomal subunit. Interacts with proteins S7 and S18. Binds to IF-3.

Located on the platform of the 30S subunit, it bridges several disparate RNA helices of the 16S rRNA. Forms part of the Shine-Dalgarno cleft in the 70S ribosome. The protein is Small ribosomal subunit protein uS11 of Desulforamulus reducens (strain ATCC BAA-1160 / DSM 100696 / MI-1) (Desulfotomaculum reducens).